A 603-amino-acid chain; its full sequence is Zyxin (603 aa).

Over residues Met1 to Leu13 the composition is skewed to pro residues. 5 disordered regions span residues Met1–Pro131, Thr166–Ser193, Ala218–Gly237, Arg310–Ser333, and Leu363–Thr395. Basic and acidic residues predominate over residues Val69–Tyr95. A compositionally biased stretch (polar residues) spans Glu184 to Ser193. The span at Ala218–Asn234 shows a compositional bias: low complexity. Composition is skewed to polar residues over residues Thr315–Ser333, Leu363–Ile373, and Pro382–Ala391. LIM zinc-binding domains are found at residues Asn409–Lys470, Cys471–Pro529, and Arg530–Ser601.

This sequence belongs to the zyxin/ajuba family. Interacts with dyc-1. Interacts with glh-1 and glh-3. Expressed in neurons and body wall muscle. Expressed in pharyngeal, enteric and uterine muscles and in spermatheca.

It localises to the nucleus. The protein resides in the cytoplasm. It is found in the myofibril. Its subcellular location is the sarcomere. The protein localises to the m line. It localises to the cell projection. The protein resides in the axon. It is found in the cell junction. Its subcellular location is the focal adhesion. The protein localises to the cytoskeleton. Its function is as follows. Functions both as a mechanical stabilizer (via LIM domains) of focal adhesions, and as a sensor component for muscle cell damage (via N-terminus). Regulates, stabilizes and maintains posterior lateral mechanosensory (PLM) synaptic branch extension and new synapse formation and growth during larval development. This Caenorhabditis elegans protein is Zyxin.